Consider the following 684-residue polypeptide: Protein-glutamine gamma-glutamyltransferase 4 (684 aa).

Active-site residues include Cys-268, His-327, and Asp-350. Positions 390, 392, 442, and 447 each coordinate Ca(2+).

This sequence belongs to the transglutaminase superfamily. Transglutaminase family. As to quaternary structure, homodimer. The cofactor is Ca(2+). Prostate.

The catalysed reaction is L-glutaminyl-[protein] + L-lysyl-[protein] = [protein]-L-lysyl-N(6)-5-L-glutamyl-[protein] + NH4(+). In terms of biological role, associated with the mammalian reproductive process. Catalyzes the cross-linking of proteins and the conjugation of polyamines to specific proteins in the seminal tract. This chain is Protein-glutamine gamma-glutamyltransferase 4 (TGM4), found in Homo sapiens (Human).